We begin with the raw amino-acid sequence, 1735 residues long: Inactive tyrosine-protein kinase PEAK1 (1735 aa).

Disordered regions lie at residues 26–66 and 111–145; these read LHQL…PPVA and LSQK…KISN. 2 stretches are compositionally biased toward polar residues: residues 111 to 121 and 130 to 145; these read LSQKPLNNNSE and DPQQ…KISN. Position 282 is a phosphoserine (Ser282). Disordered stretches follow at residues 324-410, 491-514, and 537-580; these read NSGV…SVKV, GRPK…LTPG, and SPRQ…SKTI. Residues 325-336 are compositionally biased toward low complexity; it reads SGVSYGQGSVQS. The segment covering 337–365 has biased composition (polar residues); the sequence is TISSDCTSPGSSFTEESRSETASSLSQKV. Residues 367–378 show a composition bias toward low complexity; that stretch reads NGGISPGNPGNS. Residues 384 to 393 are compositionally biased toward polar residues; it reads TESNFESPPG. The span at 498–509 shows a compositional bias: low complexity; the sequence is SSSTPNSPVTSP. 3 positions are modified to phosphoserine: Ser537, Ser569, and Ser584. Polar residues predominate over residues 566 to 580; the sequence is APTSPTATNISSKTI. Residues Tyr632 and Tyr638 each carry the phosphotyrosine modification. At Ser645 the chain carries Phosphoserine. A Phosphotyrosine modification is found at Tyr662. Disordered stretches follow at residues 663–762, 800–919, and 1019–1097; these read EEIE…REKA, PDAD…AADA, and RNSE…SATY. Polar residues-rich tracts occupy residues 704–735, 745–757, and 819–839; these read QEFN…QRPT, AQGS…SSNS, and LFTS…SPTA. Phosphoserine is present on residues Ser824 and Ser825. A compositionally biased stretch (low complexity) spans 847 to 863; the sequence is TKPVTSPPSKLVTSAQS. Over residues 864 to 873 the composition is skewed to pro residues; that stretch reads EPPPPFPPPR. Residues 879–901 are compositionally biased toward polar residues; the sequence is YHASNLLQRHFTNWTKPTSPTRS. Ser897 carries the post-translational modification Phosphoserine. 2 stretches are compositionally biased toward basic and acidic residues: residues 902–919 and 1037–1055; these read TEAE…AADA and ACSR…RDPR. Residues 1076–1086 show a composition bias toward acidic residues; the sequence is EREEEKDDTLD. Thr1141 carries the post-translational modification Phosphothreonine. Position 1177 is a phosphotyrosine (Tyr1177). The segment at 1274–1300 is required for homodimerization; sequence EVVGKLRSLHTDALKRLAVKCEDLFMA. A Protein kinase domain is found at 1302 to 1664; sequence QKDQLRFGVD…LLWGPREDLF (363 aa). Position 1363 is a phosphoserine (Ser1363). The tract at residues 1394–1445 is disordered; the sequence is WEDPDAPEKAEDGTEDSEEEGKAETLGGNPEPCSETEPSQKENQRVTNRKQR. The tract at residues 1659 to 1732 is required for homodimerization; it reads PREDLFQIFT…DSLSYIVKIL (74 aa).

The protein belongs to the protein kinase superfamily. Homodimer. Interacts with BCAR1 and CRK. Interacts with PRAG1. Interacts (when phosphorylated at Tyr-1177) with SHC1 (via PID domain). Found in a complex with PPP1CA, PPP1CC and SHC1. Interacts (when phosphorylated at Tyr-632) with tensin TNS3 (when phosphorylated on the SH2 domain); TNS3 also interacts with integrins ITGB1, ITGB3 and ITGB5 and mediates their association with PEAK1. In terms of processing, phosphorylated on tyrosine in a CSK-dependent manner in response to adhesion to fibronectin and to EGF stimulation. Phosphorylation at Tyr-662 by a Src family kinase controls subcellular localization to focal adhesion and focal adhesion dynamics. Phosphorylation at Tyr-1177 is essential for binding to SHC1. Phosphorylation at Tyr-632 promotes interaction with tensin TNS3.

It localises to the cytoplasm. The protein localises to the cytoskeleton. It is found in the cell junction. The protein resides in the focal adhesion. Its function is as follows. Probable catalytically inactive kinase. Scaffolding protein that regulates the cytoskeleton to control cell spreading and migration by modulating focal adhesion dynamics. Acts as a scaffold for mediating EGFR signaling. In Mus musculus (Mouse), this protein is Inactive tyrosine-protein kinase PEAK1 (Peak1).